The sequence spans 308 residues: MNNLEEFLDISEEVKEALHEKKAVVALESTIISHGMPYPENVESALNSEKNIRENNAVPATIAIIKGRIKVGLNKEELEYMGSNKNIAKSSRRDLPVMLALKKDGATTVTTTMIGASLAGIKVFATGGIGGVHRYAQETFDISADLQELSKTNVAVVCAGAKSILDIGLTIEYLETFGIPVLGYKTENFPAFYTRESGYKVDYKIDTTKDIANILDTKWKLGLNGGVLVCNPIPEEYEMDKDYINKIIDETVKEARDKNISGKDVTPYILAKLHSVTENKSLKANKELVYNNCRVAANIAYDYSNLSR.

E28 functions as the Proton donor in the catalytic mechanism. Residues K89 and V109 each coordinate substrate. A Mn(2+)-binding site is contributed by D141. Residue 143-145 participates in substrate binding; the sequence is SAD. K162 functions as the Nucleophile in the catalytic mechanism.

Belongs to the pseudouridine-5'-phosphate glycosidase family. As to quaternary structure, homotrimer. Mn(2+) serves as cofactor.

It catalyses the reaction D-ribose 5-phosphate + uracil = psi-UMP + H2O. Its function is as follows. Catalyzes the reversible cleavage of pseudouridine 5'-phosphate (PsiMP) to ribose 5-phosphate and uracil. Functions biologically in the cleavage direction, as part of a pseudouridine degradation pathway. This is Pseudouridine-5'-phosphate glycosidase from Brachyspira hyodysenteriae (strain ATCC 49526 / WA1).